Consider the following 363-residue polypeptide: NAD(P)H-quinone oxidoreductase subunit 1, chloroplastic (363 aa).

6 consecutive transmembrane segments (helical) span residues 30 to 50 (LIPIFTLVLGITIGVLVIVWL), 104 to 124 (IAVISILLSYLVIPFSYHLVL), 127 to 147 (LSIGVFLWIAISSIAPVGLLM), 248 to 268 (YSGIKFGLFYVASYLNLLVSS), 300 to 320 (VFGTIIGIFITLAKTYLFLFI), and 343 to 363 (FLLPISLGNLLLTTCSQLISL).

It belongs to the complex I subunit 1 family. NDH is composed of at least 16 different subunits, 5 of which are encoded in the nucleus.

It is found in the plastid. Its subcellular location is the chloroplast thylakoid membrane. It catalyses the reaction a plastoquinone + NADH + (n+1) H(+)(in) = a plastoquinol + NAD(+) + n H(+)(out). It carries out the reaction a plastoquinone + NADPH + (n+1) H(+)(in) = a plastoquinol + NADP(+) + n H(+)(out). Functionally, NDH shuttles electrons from NAD(P)H:plastoquinone, via FMN and iron-sulfur (Fe-S) centers, to quinones in the photosynthetic chain and possibly in a chloroplast respiratory chain. The immediate electron acceptor for the enzyme in this species is believed to be plastoquinone. Couples the redox reaction to proton translocation, and thus conserves the redox energy in a proton gradient. The sequence is that of NAD(P)H-quinone oxidoreductase subunit 1, chloroplastic from Lactuca sativa (Garden lettuce).